The sequence spans 131 residues: Glycine cleavage system H protein (131 aa).

The Lipoyl-binding domain maps to 24–106 (TVTIGITDHA…YEDGWIIKLK (83 aa)). Lys-65 is subject to N6-lipoyllysine.

It belongs to the GcvH family. The glycine cleavage system is composed of four proteins: P, T, L and H. (R)-lipoate serves as cofactor.

Functionally, the glycine cleavage system catalyzes the degradation of glycine. The H protein shuttles the methylamine group of glycine from the P protein to the T protein. In Chromohalobacter salexigens (strain ATCC BAA-138 / DSM 3043 / CIP 106854 / NCIMB 13768 / 1H11), this protein is Glycine cleavage system H protein.